Reading from the N-terminus, the 1380-residue chain is DNA-directed RNA polymerase subunit beta (1380 aa).

The protein belongs to the RNA polymerase beta chain family. As to quaternary structure, the RNAP catalytic core consists of 2 alpha, 1 beta, 1 beta' and 1 omega subunit. When a sigma factor is associated with the core the holoenzyme is formed, which can initiate transcription.

The enzyme catalyses RNA(n) + a ribonucleoside 5'-triphosphate = RNA(n+1) + diphosphate. Functionally, DNA-dependent RNA polymerase catalyzes the transcription of DNA into RNA using the four ribonucleoside triphosphates as substrates. In Nitrobacter hamburgensis (strain DSM 10229 / NCIMB 13809 / X14), this protein is DNA-directed RNA polymerase subunit beta.